We begin with the raw amino-acid sequence, 599 residues long: Zinc metalloproteinase dpy-31 (599 aa).

A signal peptide spans methionine 1–glycine 22. The propeptide occupies arginine 23 to lysine 211. Residues lysine 211 to serine 410 form the Peptidase M12A domain. The N-linked (GlcNAc...) asparagine glycan is linked to asparagine 251. 5 disulfides stabilise this stretch: cysteine 254/cysteine 409, cysteine 277/cysteine 298, cysteine 413/cysteine 433, cysteine 435/cysteine 444, and cysteine 455/cysteine 483. Histidine 306 contributes to the Zn(2+) binding site. Residue glutamate 307 is part of the active site. Zn(2+)-binding residues include histidine 310 and histidine 316. The 41-residue stretch at asparagine 405–glutamate 445 folds into the EGF-like domain. The CUB domain maps to cysteine 455–leucine 571. N-linked (GlcNAc...) asparagine glycosylation occurs at asparagine 522.

Zn(2+) serves as cofactor.

The protein localises to the secreted. Its activity is regulated as follows. Inhibited by marimastat and tripeptide hydroxamic acids. Metalloprotease which cleaves the carboxyl terminus of procollagens to mature collagens. Probably involved in cuticular collagen maturation. This chain is Zinc metalloproteinase dpy-31, found in Brugia malayi (Filarial nematode worm).